Reading from the N-terminus, the 168-residue chain is Putative B3 domain-containing protein Os10g0158600 (168 aa).

Residues 4–97 (VVFASARLNA…KARVMLLNRQ (94 aa)) constitute a DNA-binding region (TF-B3). The segment at 105 to 151 (KTPSTTSSDKNRSLSPSDQLTRASTSAHPSTSKSIPPLRNGTGSTKR) is disordered. Over residues 106 to 138 (TPSTTSSDKNRSLSPSDQLTRASTSAHPSTSKS) the composition is skewed to polar residues.

Its subcellular location is the nucleus. This chain is Putative B3 domain-containing protein Os10g0158600, found in Oryza sativa subsp. japonica (Rice).